A 288-amino-acid polypeptide reads, in one-letter code: ATP synthase gamma chain (288 aa).

This sequence belongs to the ATPase gamma chain family. F-type ATPases have 2 components, CF(1) - the catalytic core - and CF(0) - the membrane proton channel. CF(1) has five subunits: alpha(3), beta(3), gamma(1), delta(1), epsilon(1). CF(0) has three main subunits: a, b and c.

The protein localises to the cell inner membrane. Its function is as follows. Produces ATP from ADP in the presence of a proton gradient across the membrane. The gamma chain is believed to be important in regulating ATPase activity and the flow of protons through the CF(0) complex. The chain is ATP synthase gamma chain from Paracidovorax citrulli (strain AAC00-1) (Acidovorax citrulli).